The sequence spans 226 residues: V-type proton ATPase subunit E (226 aa).

This sequence belongs to the V-ATPase E subunit family. As to quaternary structure, V-ATPase is a heteromultimeric enzyme composed of a peripheral catalytic V1 complex (components A to H) attached to an integral membrane V0 proton pore complex (components: a, c, c', c'' and d).

Its function is as follows. Subunit of the peripheral V1 complex of vacuolar ATPase essential for assembly or catalytic function. V-ATPase is responsible for acidifying a variety of intracellular compartments in eukaryotic cells. In Mesembryanthemum crystallinum (Common ice plant), this protein is V-type proton ATPase subunit E (VATE).